Here is a 125-residue protein sequence, read N- to C-terminus: Anticoagulant salivary protein 14 (125 aa).

Positions 1–21 (MGLTGTMLVLVSLAFFGSAAA) are cleaved as a signal peptide. Asn-26, Asn-81, and Asn-87 each carry an N-linked (GlcNAc...) asparagine glycan. A compositionally biased stretch (polar residues) spans 75 to 86 (GECHLTNNSGGP). The interval 75–125 (GECHLTNNSGGPNETDDYTPAPTEKPKQKKKKTKKTKKPKRKSKKDQEKNL) is disordered. Positions 91–125 (DYTPAPTEKPKQKKKKTKKTKKPKRKSKKDQEKNL) are responsible for anticoagulant activity. Positions 101 to 118 (KQKKKKTKKTKKPKRKSK) are enriched in basic residues.

This sequence belongs to the salp14 family. In terms of tissue distribution, salivary gland (at protein level). Saliva (at protein level).

The protein localises to the secreted. In terms of biological role, salivary anticoagulant protein that facilitates blood feeding of adult ticks on vertebrate species. Inhibits host coagulation factor Xa (F10). Blocks the assembly and/or early activity of the prothrombinase complex (Xa-Va/F10-F5). Inhibits the lectin pathway of complement system activation in the host. The protein is Anticoagulant salivary protein 14 of Ixodes scapularis (Black-legged tick).